Reading from the N-terminus, the 201-residue chain is Putative amino-acid transporter Mb0498 (201 aa).

The next 5 membrane-spanning stretches (helical) occupy residues 25–45, 57–77, 104–124, 133–153, and 169–189; these read VLVI…AGVG, MTLV…LLAA, LVVT…IGAL, WFFG…LGFS, and ILDA…LVTS.

It belongs to the LysE/ArgO transporter (TC 2.A.75) family.

It is found in the cell membrane. The polypeptide is Putative amino-acid transporter Mb0498 (Mycobacterium bovis (strain ATCC BAA-935 / AF2122/97)).